The primary structure comprises 200 residues: dITP/XTP pyrophosphatase (200 aa).

7 to 12 serves as a coordination point for substrate; the sequence is SNNRGK. Asp-68 functions as the Proton acceptor in the catalytic mechanism. Asp-68 lines the Mg(2+) pocket. Residues Ala-69, 154–157, Lys-177, and 182–183 each bind substrate; these read FGFD and HR.

This sequence belongs to the HAM1 NTPase family. Homodimer. Mg(2+) serves as cofactor.

The enzyme catalyses XTP + H2O = XMP + diphosphate + H(+). It catalyses the reaction dITP + H2O = dIMP + diphosphate + H(+). The catalysed reaction is ITP + H2O = IMP + diphosphate + H(+). Functionally, pyrophosphatase that catalyzes the hydrolysis of nucleoside triphosphates to their monophosphate derivatives, with a high preference for the non-canonical purine nucleotides XTP (xanthosine triphosphate), dITP (deoxyinosine triphosphate) and ITP. Seems to function as a house-cleaning enzyme that removes non-canonical purine nucleotides from the nucleotide pool, thus preventing their incorporation into DNA/RNA and avoiding chromosomal lesions. The polypeptide is dITP/XTP pyrophosphatase (Delftia acidovorans (strain DSM 14801 / SPH-1)).